The following is a 258-amino-acid chain: Isoprenyl transferase 2 (258 aa).

Residues 1-18 (MNFPPIHPSTPKMTPPDL) show a composition bias toward pro residues. Residues 1-21 (MNFPPIHPSTPKMTPPDLDPQ) are disordered. Aspartate 32 is a catalytic residue. Aspartate 32 is a binding site for Mg(2+). Substrate contacts are provided by residues 33 to 36 (GNGR), tryptophan 37, arginine 45, histidine 49, and 77 to 79 (STE). Asparagine 80 (proton acceptor) is an active-site residue. Residues tryptophan 81, arginine 83, arginine 200, and 206 to 208 (RLS) each bind substrate. Position 219 (glutamate 219) interacts with Mg(2+).

This sequence belongs to the UPP synthase family. Homodimer. Mg(2+) is required as a cofactor.

Catalyzes the condensation of isopentenyl diphosphate (IPP) with allylic pyrophosphates generating different type of terpenoids. In Nostoc sp. (strain PCC 7120 / SAG 25.82 / UTEX 2576), this protein is Isoprenyl transferase 2.